The primary structure comprises 305 residues: Aurasperone B biosynthesis cluster protein A (305 aa).

An N-terminal signal peptide occupies residues 1–26 (MSIFFSIRFWPAAISAAILWLPQVLG). N-linked (GlcNAc...) asparagine glycosylation is found at Asn-29, Asn-34, Asn-64, Asn-83, Asn-132, Asn-183, Asn-218, and Asn-288.

Belongs to the bfoA family.

Functionally, part of the gene cluster that mediates the biosynthesis of aurasperone B, a dimeric gamma-naphthopyrone. The first step in the biosynthesis of aurasperone B is the production of gamma-naphthopyrone precursor YWA1 by the non-reducing polyketide synthase albA, via condensation of one acetyl-CoA starter unit with 6 malonyl-CoA units. YWA1 is then methylated by aunE at position C-6 to yield foncesin which is further methylated at position C-8 by aunD to produce fonsecin B. A key enzyme in the biosynthetic pathway is the cytochrome P450 monooxygenase aunB which catalyzes the oxidative dimerization of fonsecin B to aurasperone B. AunB also catalyzes the oxidative dimerization of rubrofusarin B into aurasperone A. The sequence is that of Aurasperone B biosynthesis cluster protein A from Aspergillus niger (strain ATCC 1015 / CBS 113.46 / FGSC A1144 / LSHB Ac4 / NCTC 3858a / NRRL 328 / USDA 3528.7).